The primary structure comprises 168 residues: HTH-type transcriptional regulator IscR (168 aa).

Residues 2-131 form the HTH rrf2-type domain; that stretch reads KLTSKGRYAV…NNITLGELMT (130 aa). Positions 28–51 form a DNA-binding region, H-T-H motif; that stretch reads LADISERQGISLSYLEQLFSKLRK. [2Fe-2S] cluster-binding residues include cysteine 92, cysteine 98, and cysteine 104.

Requires [2Fe-2S] cluster as cofactor.

In terms of biological role, regulates the transcription of several operons and genes involved in the biogenesis of Fe-S clusters and Fe-S-containing proteins. The protein is HTH-type transcriptional regulator IscR of Vibrio parahaemolyticus serotype O3:K6 (strain RIMD 2210633).